The primary structure comprises 239 residues: 4-hydroxy-tetrahydrodipicolinate reductase (239 aa).

NAD(+)-binding positions include 8 to 13, 78 to 80, and 102 to 105; these read GSTGKM, GTT, and SANM. His-134 (proton donor/acceptor) is an active-site residue. A (S)-2,3,4,5-tetrahydrodipicolinate-binding site is contributed by His-135. Lys-138 functions as the Proton donor in the catalytic mechanism. 144 to 145 provides a ligand contact to (S)-2,3,4,5-tetrahydrodipicolinate; the sequence is GT.

This sequence belongs to the DapB family.

It is found in the cytoplasm. It catalyses the reaction (S)-2,3,4,5-tetrahydrodipicolinate + NAD(+) + H2O = (2S,4S)-4-hydroxy-2,3,4,5-tetrahydrodipicolinate + NADH + H(+). The catalysed reaction is (S)-2,3,4,5-tetrahydrodipicolinate + NADP(+) + H2O = (2S,4S)-4-hydroxy-2,3,4,5-tetrahydrodipicolinate + NADPH + H(+). The protein operates within amino-acid biosynthesis; L-lysine biosynthesis via DAP pathway; (S)-tetrahydrodipicolinate from L-aspartate: step 4/4. Functionally, catalyzes the conversion of 4-hydroxy-tetrahydrodipicolinate (HTPA) to tetrahydrodipicolinate. This Rickettsia conorii (strain ATCC VR-613 / Malish 7) protein is 4-hydroxy-tetrahydrodipicolinate reductase.